A 429-amino-acid chain; its full sequence is Enolase (429 aa).

Q162 provides a ligand contact to (2R)-2-phosphoglycerate. Catalysis depends on E204, which acts as the Proton donor. The Mg(2+) site is built by D241, E283, and D310. K335, R364, S365, and K386 together coordinate (2R)-2-phosphoglycerate. K335 serves as the catalytic Proton acceptor.

It belongs to the enolase family. Mg(2+) is required as a cofactor.

The protein localises to the cytoplasm. The protein resides in the secreted. It localises to the cell surface. The enzyme catalyses (2R)-2-phosphoglycerate = phosphoenolpyruvate + H2O. It participates in carbohydrate degradation; glycolysis; pyruvate from D-glyceraldehyde 3-phosphate: step 4/5. Its function is as follows. Catalyzes the reversible conversion of 2-phosphoglycerate (2-PG) into phosphoenolpyruvate (PEP). It is essential for the degradation of carbohydrates via glycolysis. The sequence is that of Enolase from Mycobacterium tuberculosis (strain ATCC 25177 / H37Ra).